A 321-amino-acid chain; its full sequence is Degreening-related gene dee76 protein (321 aa).

The protein belongs to the Mo25 family.

The protein is Degreening-related gene dee76 protein (DEE76) of Auxenochlorella protothecoides (Green microalga).